A 393-amino-acid chain; its full sequence is S-adenosylmethionine synthase (393 aa).

Residue histidine 16 coordinates ATP. Mg(2+) is bound at residue aspartate 18. Residue glutamate 44 participates in K(+) binding. Residues glutamate 57 and glutamine 100 each contribute to the L-methionine site. The tract at residues 100 to 110 is flexible loop; sequence QSQDIAQGVDK. Residues 167–169, 238–239, aspartate 247, 253–254, alanine 270, and lysine 274 contribute to the ATP site; these read DAK, RF, and RK. Residue aspartate 247 participates in L-methionine binding. An L-methionine-binding site is contributed by lysine 278.

It belongs to the AdoMet synthase family. As to quaternary structure, homotetramer; dimer of dimers. Requires Mg(2+) as cofactor. It depends on K(+) as a cofactor.

Its subcellular location is the cytoplasm. It catalyses the reaction L-methionine + ATP + H2O = S-adenosyl-L-methionine + phosphate + diphosphate. It functions in the pathway amino-acid biosynthesis; S-adenosyl-L-methionine biosynthesis; S-adenosyl-L-methionine from L-methionine: step 1/1. Functionally, catalyzes the formation of S-adenosylmethionine (AdoMet) from methionine and ATP. The overall synthetic reaction is composed of two sequential steps, AdoMet formation and the subsequent tripolyphosphate hydrolysis which occurs prior to release of AdoMet from the enzyme. The protein is S-adenosylmethionine synthase of Delftia acidovorans (strain DSM 14801 / SPH-1).